Consider the following 716-residue polypeptide: Polyribonucleotide nucleotidyltransferase (716 aa).

Positions 495 and 501 each coordinate Mg(2+). The KH domain occupies 562–621 (PRLFRIQINPEQIGLVIGPGGKTIRSITEQTGAKIDIEDTGAVTISAVDADSALRAKSII). In terms of domain architecture, S1 motif spans 631–699 (GDVYIGKVTR…QKGRVNLTRK (69 aa)).

The protein belongs to the polyribonucleotide nucleotidyltransferase family. The cofactor is Mg(2+).

Its subcellular location is the cytoplasm. It carries out the reaction RNA(n+1) + phosphate = RNA(n) + a ribonucleoside 5'-diphosphate. Functionally, involved in mRNA degradation. Catalyzes the phosphorolysis of single-stranded polyribonucleotides processively in the 3'- to 5'-direction. This is Polyribonucleotide nucleotidyltransferase from Synechococcus sp. (strain ATCC 27144 / PCC 6301 / SAUG 1402/1) (Anacystis nidulans).